Consider the following 368-residue polypeptide: 3-dehydroquinate synthase (368 aa).

Residues 110–114, 134–135, lysine 147, and lysine 156 each bind NAD(+); these read GVIGD and TS. Glutamate 189, histidine 254, and histidine 271 together coordinate Zn(2+).

Belongs to the sugar phosphate cyclases superfamily. Dehydroquinate synthase family. NAD(+) is required as a cofactor. Co(2+) serves as cofactor. It depends on Zn(2+) as a cofactor.

Its subcellular location is the cytoplasm. The enzyme catalyses 7-phospho-2-dehydro-3-deoxy-D-arabino-heptonate = 3-dehydroquinate + phosphate. It functions in the pathway metabolic intermediate biosynthesis; chorismate biosynthesis; chorismate from D-erythrose 4-phosphate and phosphoenolpyruvate: step 2/7. In terms of biological role, catalyzes the conversion of 3-deoxy-D-arabino-heptulosonate 7-phosphate (DAHP) to dehydroquinate (DHQ). The protein is 3-dehydroquinate synthase of Thermosynechococcus vestitus (strain NIES-2133 / IAM M-273 / BP-1).